The sequence spans 236 residues: Chorionic somatomammotropin hormone (236 aa).

Residues 1-36 form the signal peptide; that stretch reads MAPASSHREHQWTCNLVRGSRLLLLLVVSNLILCQG. 3 disulfides stabilise this stretch: Cys44–Cys51, Cys97–Cys212, and Cys229–Cys234.

This sequence belongs to the somatotropin/prolactin family.

It localises to the secreted. The sequence is that of Chorionic somatomammotropin hormone (CSH) from Ovis aries (Sheep).